Here is a 148-residue protein sequence, read N- to C-terminus: Large ribosomal subunit protein bL9 (148 aa).

It belongs to the bacterial ribosomal protein bL9 family.

In terms of biological role, binds to the 23S rRNA. The protein is Large ribosomal subunit protein bL9 of Dechloromonas aromatica (strain RCB).